We begin with the raw amino-acid sequence, 136 residues long: uncharacterized protein (136 aa).

A disordered region spans residues 1-51 (MAANATSGRPPSIALRQPEATGWRRGIPAKVATKGTQAEREGDVRSGGRAR). Basic and acidic residues predominate over residues 37-46 (QAEREGDVRS).

This is an uncharacterized protein from Homo sapiens (Human).